The primary structure comprises 32 residues: Cytochrome b6-f complex subunit 7 (32 aa).

Residues 5 to 25 (FIASASISFIITLIGLTLGFA) traverse the membrane as a helical segment.

It belongs to the PetM family. As to quaternary structure, the 4 large subunits of the cytochrome b6-f complex are cytochrome b6, subunit IV (17 kDa polypeptide, PetD), cytochrome f and the Rieske protein, while the 4 small subunits are PetG, PetL, PetM and PetN. The complex functions as a dimer.

The protein localises to the plastid. It is found in the chloroplast thylakoid membrane. Component of the cytochrome b6-f complex, which mediates electron transfer between photosystem II (PSII) and photosystem I (PSI), cyclic electron flow around PSI, and state transitions. This Guillardia theta (Cryptophyte) protein is Cytochrome b6-f complex subunit 7.